We begin with the raw amino-acid sequence, 486 residues long: Aspartyl/glutamyl-tRNA(Asn/Gln) amidotransferase subunit B (486 aa).

It belongs to the GatB/GatE family. GatB subfamily. Heterotrimer of A, B and C subunits.

The catalysed reaction is L-glutamyl-tRNA(Gln) + L-glutamine + ATP + H2O = L-glutaminyl-tRNA(Gln) + L-glutamate + ADP + phosphate + H(+). The enzyme catalyses L-aspartyl-tRNA(Asn) + L-glutamine + ATP + H2O = L-asparaginyl-tRNA(Asn) + L-glutamate + ADP + phosphate + 2 H(+). In terms of biological role, allows the formation of correctly charged Asn-tRNA(Asn) or Gln-tRNA(Gln) through the transamidation of misacylated Asp-tRNA(Asn) or Glu-tRNA(Gln) in organisms which lack either or both of asparaginyl-tRNA or glutaminyl-tRNA synthetases. The reaction takes place in the presence of glutamine and ATP through an activated phospho-Asp-tRNA(Asn) or phospho-Glu-tRNA(Gln). This is Aspartyl/glutamyl-tRNA(Asn/Gln) amidotransferase subunit B from Janthinobacterium sp. (strain Marseille) (Minibacterium massiliensis).